A 744-amino-acid polypeptide reads, in one-letter code: NADH-ubiquinone oxidoreductase 78 kDa subunit, mitochondrial (744 aa).

Residues 1–10 (MLRSTLSRSA) show a composition bias toward polar residues. Residues 1–26 (MLRSTLSRSAWRTGRHQAARNASRAF) form a disordered region. The transit peptide at 1-33 (MLRSTLSRSAWRTGRHQAARNASRAFSATAQRP) directs the protein to the mitochondrion. One can recognise a 2Fe-2S ferredoxin-type domain in the interval 34–112 (AEVELTIDGK…GMVVKTNSPL (79 aa)). [2Fe-2S] cluster is bound by residues C68, C79, C82, and C96. The 40-residue stretch at 112-151 (LTHKAREGVMEFLLANHPLDCPICDQGGECDLQDQSMRYG) folds into the 4Fe-4S His(Cys)3-ligated-type domain. The [4Fe-4S] cluster site is built by H128, C132, C135, C141, C182, C185, C188, and C232. Residues 251–307 (LKKTESIDVLDGLGSNIRVDTRGLEVMRILPRLNDEVNEEWINDKTRFACDGLKTQR) enclose the 4Fe-4S Mo/W bis-MGD-type domain.

Belongs to the complex I 75 kDa subunit family. As to quaternary structure, complex I is composed of about 40 different subunits. [2Fe-2S] cluster serves as cofactor. Requires [4Fe-4S] cluster as cofactor.

It localises to the mitochondrion inner membrane. The catalysed reaction is a ubiquinone + NADH + 5 H(+)(in) = a ubiquinol + NAD(+) + 4 H(+)(out). Functionally, core subunit of the mitochondrial membrane respiratory chain NADH dehydrogenase (Complex I) that is believed to belong to the minimal assembly required for catalysis. Complex I functions in the transfer of electrons from NADH to the respiratory chain. The immediate electron acceptor for the enzyme is believed to be ubiquinone. This is the largest subunit of complex I and it is a component of the iron-sulfur (IP) fragment of the enzyme. It may form part of the active site crevice where NADH is oxidized. The chain is NADH-ubiquinone oxidoreductase 78 kDa subunit, mitochondrial (nuo78) from Neurospora crassa (strain ATCC 24698 / 74-OR23-1A / CBS 708.71 / DSM 1257 / FGSC 987).